A 326-amino-acid polypeptide reads, in one-letter code: Adenosine receptor A1 (326 aa).

Residues 1–10 are Extracellular-facing; sequence MPHSVSAFQA. Residues 11–33 form a helical membrane-spanning segment; that stretch reads AYIGIEVLIALVSVPGNVLVIWA. The Cytoplasmic segment spans residues 34 to 46; that stretch reads VKVNQALRDATFC. The chain crosses the membrane as a helical span at residues 47-69; it reads FIASLAVADVAVGALVIPLAILI. The Extracellular portion of the chain corresponds to 70–80; the sequence is NIGPQTYFHTC. The cysteines at positions 80 and 169 are disulfide-linked. The chain crosses the membrane as a helical span at residues 81–102; sequence LMVACPVLILTQSSILALLAIA. At 103–123 the chain is on the cytoplasmic side; the sequence is VDRYLRVKIPLRYKTVVTPRR. The helical transmembrane segment at 124–146 threads the bilayer; it reads AAVAIAGCWILSLVVGLTPMFGW. Residues 147–176 are Extracellular-facing; that stretch reads NNLSKIEMAWAANGSVGEPVIKCEFEKVIS. Residue Asn159 is glycosylated (N-linked (GlcNAc...) asparagine). Residues 177 to 201 traverse the membrane as a helical segment; that stretch reads MEYMVYFNFFVWVLPPLLLMVLIYL. Topologically, residues 202–235 are cytoplasmic; sequence EVFYLIRKQLSKKVSASSGDPQKYYGKELKIAKS. Residues 236–259 form a helical membrane-spanning segment; it reads LALILFLFALSWLPLHILNCITLF. At 260–267 the chain is on the extracellular side; it reads CPTCHKPT. A helical membrane pass occupies residues 268 to 292; the sequence is ILTYIAIFLTHGNSAMNPIVYAFRI. Residues 293 to 326 are Cytoplasmic-facing; it reads QKFRVTFLKIWNDHFRCQPEPPIDEDLPEEKVDD. Cys309 carries the S-palmitoyl cysteine lipid modification.

It belongs to the G-protein coupled receptor 1 family.

It localises to the cell membrane. Receptor for adenosine. The activity of this receptor is mediated by G proteins which inhibit adenylyl cyclase. This Cavia porcellus (Guinea pig) protein is Adenosine receptor A1 (ADORA1).